Consider the following 126-residue polypeptide: uncharacterized protein (126 aa).

This sequence belongs to the SufE family.

This is an uncharacterized protein from Haemophilus influenzae (strain ATCC 51907 / DSM 11121 / KW20 / Rd).